The sequence spans 206 residues: Small ribosomal subunit protein uS4 (206 aa).

One can recognise an S4 RNA-binding domain in the interval 96-156 (SRLDNVVYRM…NKSKNQSRIK (61 aa)).

It belongs to the universal ribosomal protein uS4 family. In terms of assembly, part of the 30S ribosomal subunit. Contacts protein S5. The interaction surface between S4 and S5 is involved in control of translational fidelity.

Functionally, one of the primary rRNA binding proteins, it binds directly to 16S rRNA where it nucleates assembly of the body of the 30S subunit. With S5 and S12 plays an important role in translational accuracy. This chain is Small ribosomal subunit protein uS4, found in Buchnera aphidicola subsp. Acyrthosiphon pisum (strain 5A).